A 150-amino-acid polypeptide reads, in one-letter code: MLGAALRRCAVAATTRADPRGLLHSARTPGPAVAIQSVRCYSHGSQETDEEFDARWVTYFNKPDIDAWELRKGINTLVTYDMVPEPKIIDAALRACRRLNDFASTVRILEVVKDKAGPHKEIYPYVIQELRPTLNELGISTPEELGLDKV.

Residues 1–41 (MLGAALRRCAVAATTRADPRGLLHSARTPGPAVAIQSVRCY) constitute a mitochondrion transit peptide. An SIFI-degron motif is present at residues 2-17 (LGAALRRCAVAATTRA). 2 positions are modified to N6-acetyllysine: Lys87 and Lys113. A Phosphothreonine modification is found at Thr141.

The protein belongs to the cytochrome c oxidase subunit 5A family. Component of the cytochrome c oxidase (complex IV, CIV), a multisubunit enzyme composed of 14 subunits. The complex is composed of a catalytic core of 3 subunits MT-CO1, MT-CO2 and MT-CO3, encoded in the mitochondrial DNA, and 11 supernumerary subunits COX4I1 (or COX4I2), COX5A, COX5B, COX6A1 (or COX6A2), COX6B1 (or COX6B2), COX6C, COX7A2 (or COX7A1), COX7B, COX7C, COX8A and NDUFA4, which are encoded in the nuclear genome. The complex exists as a monomer or a dimer and forms supercomplexes (SCs) in the inner mitochondrial membrane with NADH-ubiquinone oxidoreductase (complex I, CI) and ubiquinol-cytochrome c oxidoreductase (cytochrome b-c1 complex, complex III, CIII), resulting in different assemblies (supercomplex SCI(1)III(2)IV(1) and megacomplex MCI(2)III(2)IV(2)). Interacts with AFG1L. Interacts with RAB5IF. Post-translationally, in response to mitochondrial stress, the precursor protein is ubiquitinated by the SIFI complex in the cytoplasm before mitochondrial import, leading to its degradation. Within the SIFI complex, UBR4 initiates ubiquitin chain that are further elongated or branched by KCMF1.

The protein localises to the mitochondrion inner membrane. It functions in the pathway energy metabolism; oxidative phosphorylation. Its function is as follows. Component of the cytochrome c oxidase, the last enzyme in the mitochondrial electron transport chain which drives oxidative phosphorylation. The respiratory chain contains 3 multisubunit complexes succinate dehydrogenase (complex II, CII), ubiquinol-cytochrome c oxidoreductase (cytochrome b-c1 complex, complex III, CIII) and cytochrome c oxidase (complex IV, CIV), that cooperate to transfer electrons derived from NADH and succinate to molecular oxygen, creating an electrochemical gradient over the inner membrane that drives transmembrane transport and the ATP synthase. Cytochrome c oxidase is the component of the respiratory chain that catalyzes the reduction of oxygen to water. Electrons originating from reduced cytochrome c in the intermembrane space (IMS) are transferred via the dinuclear copper A center (CU(A)) of subunit 2 and heme A of subunit 1 to the active site in subunit 1, a binuclear center (BNC) formed by heme A3 and copper B (CU(B)). The BNC reduces molecular oxygen to 2 water molecules using 4 electrons from cytochrome c in the IMS and 4 protons from the mitochondrial matrix. This is Cytochrome c oxidase subunit 5A, mitochondrial (COX5A) from Homo sapiens (Human).